Here is a 356-residue protein sequence, read N- to C-terminus: Cytochrome b translation regulator cbp7 (356 aa).

Component of a complex, at least composed of cbp7 and cbp8.

It is found in the mitochondrion. Its function is as follows. Translation factor for cob1/cytochrome b; plays a role in cob1 mRNA stabilization and required for correct folding of the protein. The polypeptide is Cytochrome b translation regulator cbp7 (Schizosaccharomyces pombe (strain 972 / ATCC 24843) (Fission yeast)).